Reading from the N-terminus, the 489-residue chain is Cobyric acid synthase (489 aa).

Positions 251-444 (GLIIAVIRLP…LHGIFANDTF (194 aa)) constitute a GATase cobBQ-type domain. The Nucleophile role is filled by Cys-329. Residue His-436 is part of the active site.

It belongs to the CobB/CobQ family. CobQ subfamily.

The protein operates within cofactor biosynthesis; adenosylcobalamin biosynthesis. Its function is as follows. Catalyzes amidations at positions B, D, E, and G on adenosylcobyrinic A,C-diamide. NH(2) groups are provided by glutamine, and one molecule of ATP is hydrogenolyzed for each amidation. This chain is Cobyric acid synthase, found in Chloroflexus aurantiacus (strain ATCC 29366 / DSM 635 / J-10-fl).